Reading from the N-terminus, the 142-residue chain is Protein-export protein SecB (142 aa).

Belongs to the SecB family. In terms of assembly, homotetramer, a dimer of dimers. One homotetramer interacts with 1 SecA dimer.

It localises to the cytoplasm. One of the proteins required for the normal export of preproteins out of the cell cytoplasm. It is a molecular chaperone that binds to a subset of precursor proteins, maintaining them in a translocation-competent state. It also specifically binds to its receptor SecA. The chain is Protein-export protein SecB from Buchnera aphidicola subsp. Acyrthosiphon pisum (strain 5A).